Consider the following 1379-residue polypeptide: MSASSTSSSSTSCPEGGEPSGSCKSSDEGESTLKKRMQQYGIASGYANSSISTLDRSQYQSLPLNGTRRVTVQFGRMKIVVPWKESDQTVGQLADAALLRYKKARGMANEDRIHVHRLECASDGGILDMDDVLEEVFDLNYDQILAITDEANGGSTTPTYSQIQKQQHHYAQPLPYARKFDGGPSTPIASAFGSVTVNHQAHRAASPYNVGFARSNSRDFAPQPTHSKERRDSVVEVSSFDQIPQSGLRVSTPKPSRQSEDVIDGKPMNQPILRSSLRTEASGSRTEEATPVKQSRVTLSPEVEKKLAEQDERKSERRKHYDKNPGRFARGSDRKSRITDALLDARDRIADQLESQNPAEETKSQMIRVKIDQGPMPGTSLVTFPPIPEKSENEKQLGIEVNAVFDESSELPGTSEPTKLSSVQIMKIEDGGRIAKDGRIRVGDCIVAIDGKPVDQMSIIRVRASISDLAAVTSRPVTLIINRSLESFLEQESSAKPIQSALQQANTQYIGHTTVVELIKSSNGFGFTVTGRETAKGERLFYIGTVKPYGVALGHLKSGDRLLEINGTPTGQWTQSEIVEKLKETMVGEKIKFLVSRVSQSAIMSTSASSENKENEETLKVVEEEKIPQKLPLPALMTPPVPKDTPALSPSGASRFEIVIPFINGSSSAGLGVSLKARVSKKSNGSKVDCGIFIKNVMHGGAAFKEGGLRVDDRIVGVEDIDLEPLDNREAQAALAKKLKEVGMISSNVRLTISRYNECNPGQISRDLSRITVDASSPSPSSRMSSHTAPDSLLPSPATRGTSSSGADSSHSRQSSASSAVPAVPARLTERDSIVSDGTSRNDESELPDSADPFNREGLGRKSLSEKRGMGAAADPQHIKLFQDIKHQRQNSAPTSSTQKRSKSQPRSSSQRNYRSPMKLVDLPTTAAASASTNSQNLDDSDMLNRRSQSMESINRPVESILRGTGQIPTGSSSKVQFMQAASPDQHPFPPGAALLRLKNEESRSRDKSRRKSMGNPFSAMRNFFGFGSKSRDASPEKTPTESVQLRSVERPKSIIDERNNGSSERAPPPLPPHQSQRRGSGGNVFVDYGEPYGLIPQYPHNTTSGYESYADSELYDRYAAHRYHPRGGPIIDEDEYIYRQQSTSGNSPINTSSYVNYGLPASNAYHVGSRIPPQTSSGSISKTSGAMRRVYPAEYDEDVAYHQQIPQQSTRYQQGSGSGRGNADYHHMFNSWFAYTGGGAVGAAPVIKSSYGSSPVRIAAASAIERGESFVVEPVSGSSASATDRRGRSTSSGAVASGSSSTGFQYAAKEKYADARSGKFNGGSTRLFIPRHGGGLSAAAFATNFGGEAYETRGGGAGGSPSQYRRRDQGPPHRFPQY.

Residues 1–23 (MSASSTSSSSTSCPEGGEPSGSC) show a composition bias toward low complexity. 2 disordered regions span residues 1–32 (MSAS…GEST) and 208–335 (YNVG…SDRK). 2 stretches are compositionally biased toward polar residues: residues 239 to 256 (SFDQ…PKPS) and 272 to 284 (ILRS…ASGS). 2 stretches are compositionally biased toward basic and acidic residues: residues 302 to 315 (EVEK…ERKS) and 322 to 335 (DKNP…SDRK). PDZ domains are found at residues 381–483 (LVTF…IINR) and 515–599 (VVEL…SRVS). A coiled-coil region spans residues 606-626 (TSASSENKENEETLKVVEEEK). In terms of domain architecture, PDZ 3 spans 659 to 750 (VIPFINGSSS…EVGMISSNVR (92 aa)). Disordered regions lie at residues 767–873 (DLSR…MGAA), 887–918 (HQRQ…RSPM), 949–1085 (QSME…GGNV), 1273–1301 (VEPV…SGSS), and 1350–1379 (AYET…FPQY). Composition is skewed to low complexity over residues 776–786 (SSPSPSSRMSS) and 798–826 (ATRG…AVPA). Composition is skewed to basic and acidic residues over residues 828–844 (LTER…RNDE) and 854–869 (FNRE…EKRG). Residues 894 to 912 (PTSSTQKRSKSQPRSSSQR) show a composition bias toward low complexity. Positions 967-977 (QIPTGSSSKVQ) are enriched in polar residues. 2 stretches are compositionally biased toward basic and acidic residues: residues 1030–1040 (KSRDASPEKTP) and 1048–1060 (SVER…DERN). Low complexity predominate over residues 1290-1301 (STSSGAVASGSS).

This sequence belongs to the PAR3 family. Required, together with pkc-3, for the localization of par-6; par-6 is involved in localizing/maintaining par-3 at the cell periphery. Interacts with par-6 and pkc-3 for localization at the periphery of anterior cortex of the embryo. In terms of tissue distribution, asymmetrically distributed at the periphery of the zygote and in dividing blastomeres of the germline lineage. Coexpressed with par-6; patchy expression observed at the periphery after completion of meiosis I and in meiosis II. On completion of metaphase II, expression is restricted to the anterior 85% of embryo length; this decreases to 55% in embryos between prophase and telophase of the first mitosis. During the first cleavage, expression is detected in the advancing furrow. Transiently coexpressed and colocalized asymmetrically with par-6 and pkc-3, in the developing somatic gonad, including the spermathecal precursor cells of L4 larvae.

It localises to the cytoplasm. Functionally, in cooperation with pkc-3, required for establishing cell polarity and regulating spindle orientation in the early embryo. Localization is crucial for recruiting par-6 and pkc-3 to the peripheral apical cortex and restricting par-2 to basolateral surfaces. Necessary for apicobasal and anterior-posterior asymmetries associated with cell adhesion and gastrulation during the first few cycles of embryogenesis, and also for epithelial cell polarity in the distal spermatheca. Regulates the asymmetric localization of csnk-1, ppk-1 and gpr-1/2 during the first embryonic division. The protein is Partitioning defective protein 3 of Caenorhabditis elegans.